We begin with the raw amino-acid sequence, 762 residues long: ATP-dependent RNA helicase SUV3 homolog, mitochondrial (762 aa).

Residues 1–36 (MQNTRRCISLICVTRQPPSLRATYGAVAAARCLHRA) constitute a mitochondrion transit peptide. The 141-residue stretch at 181–321 (NARALTRKIV…ALELLQKICE (141 aa)) folds into the Helicase ATP-binding domain. Residue 194–201 (GPTNSGKT) participates in ATP binding. One can recognise a Helicase C-terminal domain in the interval 331–508 (RYDRLTELTV…PTADQIELYA (178 aa)). The segment at 716 to 762 (EWDAQQVGQAAAASTSSKESQESPPDDSDDEDSYPGSYKKTRRKRRK) is disordered. Residues 721 to 730 (QVGQAAAAST) show a composition bias toward polar residues. The span at 739–748 (PPDDSDDEDS) shows a compositional bias: acidic residues.

The protein belongs to the helicase family. It depends on Mg(2+) as a cofactor. Mn(2+) serves as cofactor.

The protein localises to the mitochondrion. The enzyme catalyses ATP + H2O = ADP + phosphate + H(+). Major helicase player in mitochondrial RNA metabolism and maintenance. Likely component of the mitochondrial degradosome (mtEXO) complex, that degrades 3' overhang double-stranded RNA with a 3'-to-5' directionality in an ATP-dependent manner. ATPase and ATP-dependent multisubstrate helicase, able to unwind double-stranded (ds) DNA and RNA, and RNA/DNA heteroduplexes in the 5'-to-3' direction. Regulates mRNA stability and is required for the correct processing and maturation of mitochondrial transcripts. The protein is ATP-dependent RNA helicase SUV3 homolog, mitochondrial of Drosophila pseudoobscura pseudoobscura (Fruit fly).